The chain runs to 807 residues: Serine/threonine-protein kinase AfsK (807 aa).

The 257-residue stretch at 16–272 (FEVLGRLGAG…QAQLAPHLFA (257 aa)) folds into the Protein kinase domain. Residues 22–30 (LGAGGMGLV) and Lys-44 each bind ATP. Residue Ser-71 is modified to Phosphoserine; by autocatalysis. Asp-138 (proton acceptor) is an active-site residue. Thr-168 carries the phosphothreonine; by autocatalysis modification. Disordered regions lie at residues 292-328 (MIER…HRLA) and 353-429 (AGPS…PSPA). Over residues 297–315 (RGGRRTARRPPRPRPRRLR) the composition is skewed to basic residues. Low complexity predominate over residues 353–363 (AGPSAAPDGGP).

This sequence belongs to the protein kinase superfamily. Ser/Thr protein kinase family. Interacts (via the N-terminal kinase domain) with KbpA; the interaction prevents autophosphorylation of AfsK. Autophosphorylated mainly on threonine residues. Some phosphorylation on serine residues. Autophosphorylation on Thr-168 is the major site enhancing kinase activity towards AfsR, and is regulated though interaction with KbpA.

The catalysed reaction is L-seryl-[protein] + ATP = O-phospho-L-seryl-[protein] + ADP + H(+). It catalyses the reaction L-threonyl-[protein] + ATP = O-phospho-L-threonyl-[protein] + ADP + H(+). Component of the AfsK/AfsR system involved in the response of aerial mycelium formation to glucose. This Streptomyces griseus protein is Serine/threonine-protein kinase AfsK (afsK).